Here is a 160-residue protein sequence, read N- to C-terminus: Serine-protein kinase RsbW (160 aa).

It belongs to the anti-sigma-factor family.

The catalysed reaction is L-seryl-[protein] + ATP = O-phospho-L-seryl-[protein] + ADP + H(+). The enzyme catalyses L-threonyl-[protein] + ATP = O-phospho-L-threonyl-[protein] + ADP + H(+). Its function is as follows. Negative regulator of sigma-B activity. Phosphorylates and inactivates its specific antagonist protein, RsbV. Upon phosphorylation of RsbV, RsbW is released and binds to sigma-B, thereby blocking its ability to form an RNA polymerase holoenzyme (E-sigma-B). In Bacillus cereus (strain Q1), this protein is Serine-protein kinase RsbW.